The chain runs to 312 residues: Olfactory receptor-like protein COR2 (312 aa).

At 1–26 the chain is on the extracellular side; sequence MASGNCTTPTTFILSGLTDNPRLQMP. N5 is a glycosylation site (N-linked (GlcNAc...) asparagine). The helical transmembrane segment at 27–49 threads the bilayer; that stretch reads LFMVFLVIYTTTLLTNLGLIALI. The Cytoplasmic portion of the chain corresponds to 50–57; that stretch reads GMDLHLQT. Residues 58–79 traverse the membrane as a helical segment; it reads PMYIFLQNLSFTDAAYSTVITP. Residues 80 to 100 are Extracellular-facing; it reads KMLATFLEERRTISYVGCILQ. C97 and C179 are oxidised to a cystine. Residues 101-120 form a helical membrane-spanning segment; the sequence is YFSFVLLTTSEWLLLAVMAY. Residues 121–139 lie on the Cytoplasmic side of the membrane; it reads DRYVAICKPLLYPSIMTKA. Residues 140–164 traverse the membrane as a helical segment; it reads VCWRLVKGLYSLAFLNSLVHTSGLL. Over 165-205 the chain is Extracellular; sequence KLSFCSSNVVNHFFCDNRPLFQISSSSTTLNELLVIISGSL. The helical transmembrane segment at 206–226 threads the bilayer; it reads FVMSSIITILISYVFIILTVV. The Cytoplasmic portion of the chain corresponds to 227–239; sequence MIRSKDGKYKAFS. Residues 240–260 form a helical membrane-spanning segment; it reads TCTSHLMAVSLFHGTVIFMYL. Over 261-271 the chain is Extracellular; it reads RSVKLFSLDTD. Residues 272–292 traverse the membrane as a helical segment; sequence KIASLFYTVVIPMLNPLIYSW. Topologically, residues 293 to 312 are cytoplasmic; sequence RNKEVKDALRRLTATSVWLH.

The protein belongs to the G-protein coupled receptor 1 family.

Its subcellular location is the cell membrane. In terms of biological role, odorant receptor. This chain is Olfactory receptor-like protein COR2 (COR2), found in Gallus gallus (Chicken).